A 734-amino-acid polypeptide reads, in one-letter code: Photosystem I P700 chlorophyll a apoprotein A2 (734 aa).

8 helical membrane passes run 46-69, 135-158, 175-199, 273-291, 330-353, 369-395, 417-439, and 517-535; these read IFASHFGQLAIIFLWTSGNLFHVA, LYTGALFLLFISAISLIAGWLHLQ, LNHHLSGLFGVSSLAWTGHLVHVAI, MAHHHLAIAFIFLIAGHMY, IHFQLGLALASLGVITSLVAQHMY, AALYTHHQYIAGFIMTGAFAHGAIFFI, AIISHLSWASLFLGFHTLGLYVH, and FLVHHAIALGLHTTTLILV. Residues Cys559 and Cys568 each contribute to the [4Fe-4S] cluster site. 2 consecutive transmembrane segments (helical) span residues 575 to 596 and 643 to 665; these read AFYLAVFWMLNTIGWVTFYWHW and LSVWAWMFLFGHLVWATGFMFLI. Residues His654, Met662, and Tyr670 each contribute to the chlorophyll a site. Trp671 serves as a coordination point for phylloquinone. Residues 707–727 form a helical membrane-spanning segment; it reads LVGLAHFSVGYIFTYAAFLIA.

The protein belongs to the PsaA/PsaB family. In terms of assembly, the PsaA/B heterodimer binds the P700 chlorophyll special pair and subsequent electron acceptors. PSI consists of a core antenna complex that captures photons, and an electron transfer chain that converts photonic excitation into a charge separation. The eukaryotic PSI reaction center is composed of at least 11 subunits. The cofactor is P700 is a chlorophyll a/chlorophyll a' dimer, A0 is one or more chlorophyll a, A1 is one or both phylloquinones and FX is a shared 4Fe-4S iron-sulfur center..

It is found in the plastid. The protein localises to the chloroplast thylakoid membrane. The enzyme catalyses reduced [plastocyanin] + hnu + oxidized [2Fe-2S]-[ferredoxin] = oxidized [plastocyanin] + reduced [2Fe-2S]-[ferredoxin]. PsaA and PsaB bind P700, the primary electron donor of photosystem I (PSI), as well as the electron acceptors A0, A1 and FX. PSI is a plastocyanin-ferredoxin oxidoreductase, converting photonic excitation into a charge separation, which transfers an electron from the donor P700 chlorophyll pair to the spectroscopically characterized acceptors A0, A1, FX, FA and FB in turn. Oxidized P700 is reduced on the lumenal side of the thylakoid membrane by plastocyanin. This Helianthus annuus (Common sunflower) protein is Photosystem I P700 chlorophyll a apoprotein A2.